Here is a 505-residue protein sequence, read N- to C-terminus: Tyrosine-protein kinase FRK (505 aa).

Ser37 and Ser40 each carry phosphoserine. Residues 42 to 110 (RHGHYFVALF…PSNYVAEDRS (69 aa)) enclose the SH3 domain. The SH2 domain maps to 116-208 (WFFGAIGRSD…GLCVKLGKPC (93 aa)). A Phosphothreonine modification is found at Thr178. Residues 234 to 491 (IQLLKRLGSG…TLRWKLEDYF (258 aa)) form the Protein kinase domain. ATP contacts are provided by residues 240–248 (LGSGQFGEV) and Lys262. The active-site Proton acceptor is Asp354. The residue at position 387 (Tyr387) is a Phosphotyrosine; by autocatalysis.

This sequence belongs to the protein kinase superfamily. Tyr protein kinase family. SRC subfamily. In terms of assembly, interacts (via the SH3-domain) with PTEN. Interacts with RB1. In terms of tissue distribution, predominantly expressed in epithelial derived cell lines and tissues, especially normal liver, kidney, breast and colon.

It localises to the cytoplasm. The protein localises to the nucleus. It catalyses the reaction L-tyrosyl-[protein] + ATP = O-phospho-L-tyrosyl-[protein] + ADP + H(+). In terms of biological role, non-receptor tyrosine-protein kinase that negatively regulates cell proliferation. Positively regulates PTEN protein stability through phosphorylation of PTEN on 'Tyr-336', which in turn prevents its ubiquitination and degradation, possibly by reducing its binding to NEDD4. May function as a tumor suppressor. In Homo sapiens (Human), this protein is Tyrosine-protein kinase FRK (FRK).